Reading from the N-terminus, the 599-residue chain is Sulfite reductase [NADPH] flavoprotein alpha-component (599 aa).

The Flavodoxin-like domain occupies 64–202; it reads ITLISASQTG…AAAEWRARVV (139 aa). FMN contacts are provided by residues 70 to 75, 117 to 120, and 153 to 162; these read SQTGNA, STQG, and LGDTSYEFFC. The FAD-binding FR-type domain occupies 234-448; it reads EAPLTATLSV…IEHNDNFRLP (215 aa). FAD is bound by residues Thr-322, Ala-356, 386–389, 404–406, Tyr-410, and 419–422; these read RLYS, TVG, and GGAS. NADP(+) contacts are provided by residues 519-520, 525-529, and Asp-561; these read SR and KIYVQ. Tyr-599 contributes to the FAD binding site.

It belongs to the NADPH-dependent sulphite reductase flavoprotein subunit CysJ family. In the N-terminal section; belongs to the flavodoxin family. The protein in the C-terminal section; belongs to the flavoprotein pyridine nucleotide cytochrome reductase family. In terms of assembly, alpha(8)-beta(8). The alpha component is a flavoprotein, the beta component is a hemoprotein. FAD serves as cofactor. FMN is required as a cofactor.

It catalyses the reaction hydrogen sulfide + 3 NADP(+) + 3 H2O = sulfite + 3 NADPH + 4 H(+). It functions in the pathway sulfur metabolism; hydrogen sulfide biosynthesis; hydrogen sulfide from sulfite (NADPH route): step 1/1. In terms of biological role, component of the sulfite reductase complex that catalyzes the 6-electron reduction of sulfite to sulfide. This is one of several activities required for the biosynthesis of L-cysteine from sulfate. The flavoprotein component catalyzes the electron flow from NADPH -&gt; FAD -&gt; FMN to the hemoprotein component. The chain is Sulfite reductase [NADPH] flavoprotein alpha-component from Klebsiella pneumoniae subsp. pneumoniae (strain ATCC 700721 / MGH 78578).